The chain runs to 39 residues: Potassium channel toxin alpha-KTx 2.17 (39 aa).

3 cysteine pairs are disulfide-bonded: Cys7–Cys29, Cys13–Cys34, and Cys17–Cys36. The residue at position 39 (Ile39) is an Isoleucine amide.

It belongs to the short scorpion toxin superfamily. Potassium channel inhibitor family. Alpha-KTx 02 subfamily. Expressed by the venom gland.

The protein resides in the secreted. Functionally, blocks human voltage-gated potassium channels Kv1.1/KCNA1 (IC(50)=4.8 nM) and Kv1.2/KCNA2 (IC(50)=2.9 nM). In Centruroides tecomanus (Scorpion), this protein is Potassium channel toxin alpha-KTx 2.17.